A 260-amino-acid polypeptide reads, in one-letter code: Cytosolic Fe-S cluster assembly factor Nubp2 homolog (260 aa).

14–21 (GKGGVGKS) contributes to the ATP binding site. [4Fe-4S] cluster is bound by residues Cys188 and Cys191.

Belongs to the Mrp/NBP35 ATP-binding proteins family. NUBP2/CFD1 subfamily. As to quaternary structure, heterotetramer of 2 Nubp1 and 2 Nubp2 chains. It depends on [4Fe-4S] cluster as a cofactor.

It is found in the cytoplasm. In terms of biological role, component of the cytosolic iron-sulfur (Fe/S) protein assembly (CIA) machinery. Required for maturation of extramitochondrial Fe-S proteins. The Nubp1-Nubp2 heterotetramer forms a Fe-S scaffold complex, mediating the de novo assembly of an Fe-S cluster and its transfer to target apoproteins. This is Cytosolic Fe-S cluster assembly factor Nubp2 homolog from Drosophila simulans (Fruit fly).